The following is a 140-amino-acid chain: MLLLVAPEQEPVQSTAPLFTERCPAGFPSPAADYTEEELDLNAYCIRRPAATFFVRAIGDSMKEMGLHSGDLMVVDKAEKPMQGDIVIAETDGEFTVKRLQLKPRIALLPINPAYPTLYPEELQIFGVVTAFIHKTRSTD.

Residues Ser61 and Lys98 each act as for autocatalytic cleavage activity in the active site.

Belongs to the peptidase S24 family.

Its function is as follows. Involved in UV protection and mutation. The chain is Protein SamA (samA) from Salmonella typhimurium (strain LT2 / SGSC1412 / ATCC 700720).